A 277-amino-acid polypeptide reads, in one-letter code: Undecaprenyl-diphosphatase (277 aa).

6 helical membrane-spanning segments follow: residues 47–67 (FNII…RGKI), 85–105 (ANLL…ADLI), 108–128 (WLFN…VMLW), 183–203 (AATE…AVYS), 218–238 (VFAV…RALL), and 249–269 (FAWY…FHLI).

This sequence belongs to the UppP family.

It localises to the cell inner membrane. It catalyses the reaction di-trans,octa-cis-undecaprenyl diphosphate + H2O = di-trans,octa-cis-undecaprenyl phosphate + phosphate + H(+). In terms of biological role, catalyzes the dephosphorylation of undecaprenyl diphosphate (UPP). Confers resistance to bacitracin. This is Undecaprenyl-diphosphatase from Pseudomonas aeruginosa (strain UCBPP-PA14).